The primary structure comprises 120 residues: UPF0231 protein NT01EI_0766 (120 aa).

Belongs to the UPF0231 family.

The sequence is that of UPF0231 protein NT01EI_0766 from Edwardsiella ictaluri (strain 93-146).